Here is a 359-residue protein sequence, read N- to C-terminus: Serine hydrolase-like protein DDB_G0286239 (359 aa).

An AB hydrolase-1 domain is found at 38–289; sequence LALHGWLDNA…VPGSHHFHME (252 aa). The active site involves Ser111. Residues 310-359 form a disordered region; that stretch reads FTPSSTTQQQQQQQQSAENKKGDNHNQIAEQDLSTSNTSSPIISKPKPNL. Residues 334–351 are compositionally biased toward polar residues; it reads HNQIAEQDLSTSNTSSPI.

The protein belongs to the AB hydrolase superfamily.

Functionally, probable serine hydrolase. The sequence is that of Serine hydrolase-like protein DDB_G0286239 from Dictyostelium discoideum (Social amoeba).